We begin with the raw amino-acid sequence, 131 residues long: Small ribosomal subunit protein uS11 (131 aa).

Belongs to the universal ribosomal protein uS11 family. Part of the 30S ribosomal subunit. Interacts with proteins S7 and S18. Binds to IF-3.

Its function is as follows. Located on the platform of the 30S subunit, it bridges several disparate RNA helices of the 16S rRNA. Forms part of the Shine-Dalgarno cleft in the 70S ribosome. The polypeptide is Small ribosomal subunit protein uS11 (Clostridium novyi (strain NT)).